The primary structure comprises 243 residues: Sugar fermentation stimulation protein homolog (243 aa).

This sequence belongs to the SfsA family.

This is Sugar fermentation stimulation protein homolog from Bdellovibrio bacteriovorus (strain ATCC 15356 / DSM 50701 / NCIMB 9529 / HD100).